The following is a 965-amino-acid chain: Collagen alpha-1(I) chain (965 aa).

The disordered stretch occupies residues 1–965; that stretch reads GGISVPGPMG…PGPPGPPGPP (965 aa). 11 positions are modified to 4-hydroxyproline: P18, P21, P23, P32, P35, P38, P53, P68, P74, P83, and P89. Positions 26 to 44 are enriched in low complexity; it reads QGFQGPPGEPGEPGSSGPM. Over residues 56-70 the composition is skewed to basic and acidic residues; it reads NGDDGEAGKPGRPGE. The residue at position 92 (K92) is a 5-hydroxylysine; alternate. O-linked (Gal...) hydroxylysine; alternate glycosylation is present at K92. Residue S98 is modified to Phosphoserine. Low complexity predominate over residues 106-122; it reads DAGPAGPKGEPGSPGEN. P116, P119, P125, P139, P160, P169, P172, P199, P202, P214, P220, P229, P235, P238, and P253 each carry 4-hydroxyproline. A compositionally biased stretch (low complexity) spans 139 to 157; it reads PGASGPAGARGNDGATGAA. The span at 159-171 shows a compositional bias: pro residues; the sequence is PPGPTGPAGPPGF. The segment covering 205–244 has biased composition (low complexity); that stretch reads AGAAGPAGNPGADGQPGAKGANGAPGIAGAPGFPGARGPS. Position 256 is a 5-hydroxylysine (K256). P262, P265, P269, P278, P293, P299, P308, and P314 each carry 4-hydroxyproline. Residues 303–312 are compositionally biased toward gly residues; the sequence is GERGGPGSRG. The residue at position 323 (K323) is a 5-hydroxylysine. 4-hydroxyproline occurs at positions 326, 332, 338, 347, 350, 359, 368, 374, 386, 395, 404, 407, 425, 442, 448, 454, 460, 466, 472, 484, 493, 506, 512, and 521. The segment covering 341–367 has biased composition (low complexity); the sequence is KGLTGSPGSPGPDGKTGPPGPAGQDGR. The span at 376 to 395 shows a compositional bias: low complexity; sequence ARGQAGVMGFPGPKGAAGEP. Positions 454–463 are enriched in low complexity; it reads PGEAGKPGEQ. Position 533 is a 5-hydroxylysine (K533). Residues P539, P554, and P560 each carry the 4-hydroxyproline modification. Low complexity predominate over residues 566-580; the sequence is SGPSGPAGPTGARGA. A Phosphoserine modification is found at S569. A 4-hydroxyproline mark is found at P581, P587, P590, P599, P605, P623, P632, and P641. Residues 593–620 show a composition bias toward low complexity; that stretch reads AGFAGPPGADGQPGAKGEPGDAGAKGDA. At K644 the chain carries 5-hydroxylysine. Residues 649–665 show a composition bias toward low complexity; the sequence is SAGPPGATGFPGAAGRV. Residues P653 and P659 each carry the 4-hydroxyproline modification. P667 is subject to 3-hydroxyproline. Residues P668, P677, P680, P716, P725, P743, P752, P755, P761, P776, P782, P788, P796, and P802 each carry the 4-hydroxyproline modification. Residues 710-725 are compositionally biased toward low complexity; that stretch reads SGEKGSPGADGPAGAP. The span at 775–785 shows a compositional bias: pro residues; it reads PPGPMGPPGLA. K811 carries the post-translational modification 5-hydroxylysine. Residues P819, P822, and P825 each carry the 4-hydroxyproline modification. A compositionally biased stretch (pro residues) spans 819 to 831; that stretch reads PGAPGAPGAPGPV. Over residues 851–865 the composition is skewed to low complexity; it reads AGPAGARGPAGPQGP. Residues 866–880 are compositionally biased toward basic and acidic residues; sequence RGDKGETGEQGDRGI. K869 carries the 5-hydroxylysine modification. Position 881 is a 5-hydroxylysine; alternate (K881). K881 carries O-linked (Gal...) hydroxylysine; alternate glycosylation. P896, P899, P917, and P932 each carry 4-hydroxyproline. The span at 899–932 shows a compositional bias: low complexity; that stretch reads PGEQGPSGASGPAGPRGPPGSAGSPGKDGLNGLP. At P937 the chain carries 3-hydroxyproline. A 4-hydroxyproline modification is found at P938. The span at 950 to 965 shows a compositional bias: pro residues; the sequence is VGPPGPPGPPGPPGPP. P952 carries the post-translational modification 3-hydroxyproline. 4-hydroxyproline is present on P953. P955 carries the post-translational modification 3-hydroxyproline. 4-hydroxyproline is present on P956. P958 bears the 3-hydroxyproline mark. 4-hydroxyproline occurs at positions 959, 962, and 965.

This sequence belongs to the fibrillar collagen family. Trimers of one alpha 2(I) and two alpha 1(I) chains. Contains mostly 4-hydroxyproline. Proline residues at the third position of the tripeptide repeating unit (G-X-Y) are hydroxylated in some or all of the chains. Post-translationally, contains 3-hydroxyproline at a few sites. This modification occurs on the first proline residue in the sequence motif Gly-Pro-Hyp, where Hyp is 4-hydroxyproline. In terms of processing, lysine residues at the third position of the tripeptide repeating unit (G-X-Y) are 5-hydroxylated in some or all of the chains. O-glycosylated on hydroxylated lysine residues. The O-linked glycan consists of a Glc-Gal disaccharide. In terms of tissue distribution, expressed in bones.

It is found in the secreted. Its subcellular location is the extracellular space. The protein resides in the extracellular matrix. Functionally, type I collagen is a member of group I collagen (fibrillar forming collagen). This chain is Collagen alpha-1(I) chain, found in Acratocnus sp. (strain SLP-2019) (Ground sloth).